A 364-amino-acid polypeptide reads, in one-letter code: tRNA (adenine(58)-N(1))-methyltransferase catalytic subunit trm61 (364 aa).

Residues 114 to 116 (SAS), Glu135, Arg140, 167 to 168 (DV), and Asp186 contribute to the S-adenosyl-L-methionine site. The segment at 280–309 (EQNLSSDAKVEDQDNDSMLGENKSSVSTET) is disordered.

This sequence belongs to the class I-like SAM-binding methyltransferase superfamily. TRM61 family. In terms of assembly, heterotetramer; composed of two copies of TRM6 and two copies of TRM61.

Its subcellular location is the nucleus. It catalyses the reaction adenosine(58) in tRNA + S-adenosyl-L-methionine = N(1)-methyladenosine(58) in tRNA + S-adenosyl-L-homocysteine + H(+). Catalytic subunit of tRNA (adenine-N(1)-)-methyltransferase, which catalyzes the formation of N(1)-methyladenine at position 58 (m1A58) in initiator methionyl-tRNA. The protein is tRNA (adenine(58)-N(1))-methyltransferase catalytic subunit trm61 (cpd1) of Schizosaccharomyces pombe (strain 972 / ATCC 24843) (Fission yeast).